The primary structure comprises 222 residues: Protein-L-isoaspartate O-methyltransferase (222 aa).

The active site involves Ser65.

It belongs to the methyltransferase superfamily. L-isoaspartyl/D-aspartyl protein methyltransferase family.

It localises to the cytoplasm. The catalysed reaction is [protein]-L-isoaspartate + S-adenosyl-L-methionine = [protein]-L-isoaspartate alpha-methyl ester + S-adenosyl-L-homocysteine. Functionally, catalyzes the methyl esterification of L-isoaspartyl residues in peptides and proteins that result from spontaneous decomposition of normal L-aspartyl and L-asparaginyl residues. It plays a role in the repair and/or degradation of damaged proteins. This is Protein-L-isoaspartate O-methyltransferase from Chlorobium luteolum (strain DSM 273 / BCRC 81028 / 2530) (Pelodictyon luteolum).